The chain runs to 277 residues: Orotidine 5'-phosphate decarboxylase (277 aa).

Residues aspartate 40, 62–64 (KTH), 93–102 (DRKFIDIGNT), tyrosine 229, and arginine 247 each bind substrate. Lysine 95 functions as the Proton donor in the catalytic mechanism.

The protein belongs to the OMP decarboxylase family.

It carries out the reaction orotidine 5'-phosphate + H(+) = UMP + CO2. It functions in the pathway pyrimidine metabolism; UMP biosynthesis via de novo pathway; UMP from orotate: step 2/2. This Aspergillus oryzae (strain ATCC 42149 / RIB 40) (Yellow koji mold) protein is Orotidine 5'-phosphate decarboxylase (pyrG).